Here is a 43-residue protein sequence, read N- to C-terminus: Protein PsbN (43 aa).

A helical membrane pass occupies residues 7–27 (LIVAIAAVTICITAFAIYTAF).

This sequence belongs to the PsbN family.

It localises to the cellular thylakoid membrane. Functionally, may play a role in photosystem I and II biogenesis. This chain is Protein PsbN, found in Synechococcus sp. (strain JA-2-3B'a(2-13)) (Cyanobacteria bacterium Yellowstone B-Prime).